A 31-amino-acid polypeptide reads, in one-letter code: Cytochrome b6-f complex subunit 6 (31 aa).

A helical membrane pass occupies residues 4–26 (ITSYFGFLLAASTITTALFIGLS).

This sequence belongs to the PetL family. The 4 large subunits of the cytochrome b6-f complex are cytochrome b6, subunit IV (17 kDa polypeptide, PetD), cytochrome f and the Rieske protein, while the 4 small subunits are PetG, PetL, PetM and PetN. The complex functions as a dimer.

It is found in the plastid. The protein resides in the chloroplast thylakoid membrane. In terms of biological role, component of the cytochrome b6-f complex, which mediates electron transfer between photosystem II (PSII) and photosystem I (PSI), cyclic electron flow around PSI, and state transitions. PetL is important for photoautotrophic growth as well as for electron transfer efficiency and stability of the cytochrome b6-f complex. The polypeptide is Cytochrome b6-f complex subunit 6 (Acorus calamus (Sweet flag)).